Reading from the N-terminus, the 637-residue chain is MGSNDRASRSPRSDDQREISDMPATKRTRSDSGKSTDSKIPYLSQPLYDLKQTGDVKFGPGTRSALLGLLGGALPKLSSEQHDLVSKAKKYAMEQSIKMVLMKQTLAHQQQQLATQRTQVQRQQALALMCRVYVGSISFELKEDTIRVAFTPFGPIKSINMSWDPITQKHKGFAFVEYEIPEGAQLALEQMNGALMGGRNIKVGRPSNMPQAQQVIDEVQEEAKSFNRIYVASIHPDLSEEDIKSVFEAFGPILYCKLAQGTSLHTHKGYGFIEYANKQAMDEAIASMNLFDLGGQLLRVGRSITPPNALACPTTNSTMPTAAAVAAAAATAKIQALDAVASNAVLGLSQNTPVMAAGAVVTKVGAMPVVSAATSAAALHPALAQAAPALLPPGIFQAPTPVAPSLLGVPAGLQPLQAVVPTLPPPALLATPTLPMTVGGVGVGLVPTVATLAGAEASKGAAAAAALSAAANNAAVTAANLSENIKKAHEKQQEELQKKLMDEGDVQTLQQQENMSIKGQSARQLVMQRLMRPVDSRVIILRNMVGPEDVDETLQEEIQEECSKFGTVSRVIIFNEKQTENEDDDEAEIIVKIFVEFSAGAEAMRGKEALDGRFFGGRRVVAELYDQGIFDQGDLSG.

Basic and acidic residues-rich tracts occupy residues 1–20 (MGSN…REIS) and 28–37 (TRSDSGKSTD). Residues 1–41 (MGSNDRASRSPRSDDQREISDMPATKRTRSDSGKSTDSKIP) are disordered. Phosphoserine occurs at positions 13 and 30. RRM domains follow at residues 130 to 208 (CRVY…RPSN) and 227 to 305 (NRIY…RSIT). The region spanning 537–627 (RVIILRNMVG…RRVVAELYDQ (91 aa)) is the RRM 3; atypical domain.

Belongs to the RRM half pint family. In terms of assembly, interacts with enc. However, given the cytoplasmic localization of enc, the relevance of such interaction is unclear. Expressed in all germline cells and within the follicle cell.

It localises to the nucleus. In terms of biological role, splicing factor that regulates oogenesis and controls both mitosis and mRNA localization in the germline by regulating mRNA splicing of a subset of genes within the ovary. Probably acts by regulating the alternative splice site selection of the otu transcript. Also regulates the alternative splicing of eIF4E1 and grk, while it is not involved in the splicing of par-1, sqd or psq. Involved in the alternative splicing of the bicistronic pre-mRNA encoding Kdm3 and CG8176; required for the efficient production of mRNA encoding Kdm3 and Kdm3-mediated regulation of rhino-dependent piRNA production. The chain is Poly(U)-binding-splicing factor hfp from Drosophila melanogaster (Fruit fly).